The primary structure comprises 671 residues: Transcriptional regulator Kaiso (671 aa).

The interaction with NCOR1 stretch occupies residues 1–103 (MESRKLISAT…RADLLDELIK (103 aa)). The segment at 1-136 (MESRKLISAT…SGTEQDGTAE (136 aa)) is self-association. In terms of domain architecture, BTB spans 32–94 (CDVTVIVEDR…IYSSKVVRVR (63 aa)). Positions 127 to 144 (SGTEQDGTAETLPSSSSD) are enriched in polar residues. Residues 127 to 161 (SGTEQDGTAETLPSSSSDKSLDMEKSKDEAQDNGA) are disordered. A compositionally biased stretch (basic and acidic residues) spans 145–156 (KSLDMEKSKDEA). Residues Lys-151 and Lys-153 each participate in a glycyl lysine isopeptide (Lys-Gly) (interchain with G-Cter in SUMO2) cross-link. Residue Thr-251 is modified to Phosphothreonine. Residues 298 to 571 (LPNHMSSSVN…FMSSHIKSVH (274 aa)) form an interaction with CBFA2T3 region. A disordered region spans residues 332-365 (IIDDDDDIISSSPDSAVSNTSLVPQADNSKSTTL). A compositionally biased stretch (polar residues) spans 347–365 (AVSNTSLVPQADNSKSTTL). Glycyl lysine isopeptide (Lys-Gly) (interchain with G-Cter in SUMO2) cross-links involve residues Lys-388, Lys-405, Lys-412, and Lys-447. Residues 451–461 (DGGEAKLDNEL) show a composition bias toward basic and acidic residues. The tract at residues 451–474 (DGGEAKLDNELPKTSGSEPPNKRM) is disordered. Residues 452 to 671 (GGEAKLDNEL…EFEFIIPESY (220 aa)) form an interaction with CTNND1 region. Residues Lys-463, Lys-472, and Lys-477 each participate in a glycyl lysine isopeptide (Lys-Gly) (interchain with G-Cter in SUMO2) cross-link. Residues 469–478 (PPNKRMKVKH) carry the Nuclear localization signal motif. 3 consecutive C2H2-type zinc fingers follow at residues 492-514 (YICIVCKRSYVCLTSLRRHFNIH), 520-542 (YQCRYCDKVFPLAEYRTKHEIHH), and 548-571 (YQCLTCGKSFINYQFMSSHIKSVH). The interval 512-637 (NIHSWEKKYQ…TSTPPQNKST (126 aa)) is required for DNA-binding. Glycyl lysine isopeptide (Lys-Gly) (interchain with G-Cter in SUMO2) cross-links involve residues Lys-537, Lys-568, Lys-580, Lys-609, and Lys-616.

As to quaternary structure, interacts with NCOR1. Self-associates. Interacts with CTNND1, and this interaction inhibits binding to both methylated and non-methylated DNA. Interacts with CTNND2. Interacts with KPNA2/RCH1, which may mediate nuclear import of this protein. Interacts with CBFA2T3. Expressed in brain, heart, kidney, liver, lung, neuromuscular junctions, skeletal muscle, spleen and testis.

It is found in the nucleus. Functionally, transcriptional regulator with bimodal DNA-binding specificity. Binds to methylated CpG dinucleotides in the consensus sequence 5'-CGCG-3' and also binds to the non-methylated consensus sequence 5'-CTGCNA-3' also known as the consensus kaiso binding site (KBS). May recruit the N-CoR repressor complex to promote histone deacetylation and the formation of repressive chromatin structures in target gene promoters. Contributes to the repression of target genes of the Wnt signaling pathway. May also activate transcription of a subset of target genes by the recruitment of CTNND2. Represses expression of MMP7 in conjunction with transcriptional corepressors CBFA2T3, CBFA2T2 and RUNX1T1. The sequence is that of Transcriptional regulator Kaiso (Zbtb33) from Mus musculus (Mouse).